Here is a 128-residue protein sequence, read N- to C-terminus: MFS18 protein (128 aa).

An N-terminal signal peptide occupies residues 1–25; it reads MARSSKMMVAARLLALALAVSTAEA. Residues 26-79 form a disordered region; the sequence is RNIKTTTTEKKDDAVVQPQTFPPFDRLGGGASPAFGGLPGGSIPGSSIPGFSMP. The span at 52–68 shows a compositional bias: gly residues; the sequence is LGGGASPAFGGLPGGSI. 11 repeat units span residues 64 to 67, 64 to 75, 69 to 72, 69 to 80, 74 to 77, 79 to 82, 81 to 92, 86 to 89, 91 to 94, 104 to 107, and 113 to 116. A 3 X approximate tandem repeats region spans residues 64–92; that stretch reads PGGSIPGSSIPGFSMPGSGSSLPGFSLPG. Residues 64 to 116 are 8 X 4 AA approximate repeats; that stretch reads PGGSIPGSSIPGFSMPGSGSSLPGFSLPGSGTMPLFGGGSPGFSGFGGMPGSP. Positions 69-79 are enriched in low complexity; it reads PGSSIPGFSMP. The span at 99–113 shows a compositional bias: gly residues; it reads FGGGSPGFSGFGGMP. A disordered region spans residues 99–128; that stretch reads FGGGSPGFSGFGGMPGSPTAGSVPEHANKP.

In terms of tissue distribution, enhanced expression in male flowers. Accumulates in the glumes and in anther walls, paleas and lemmas of mature florets.

The polypeptide is MFS18 protein (MFS18) (Zea mays (Maize)).